A 124-amino-acid polypeptide reads, in one-letter code: Kalata-B1 (124 aa).

Positions methionine 1–glycine 22 are cleaved as a signal peptide. The propeptide occupies serine 23–lysine 88. Positions glycine 89–asparagine 117 form a cross-link, cyclopeptide (Gly-Asn). Cystine bridges form between cysteine 93-cysteine 107, cysteine 97-cysteine 109, and cysteine 102-cysteine 114. A propeptide spanning residues glycine 118–alanine 124 is cleaved from the precursor.

Belongs to the cyclotide family. Moebius subfamily. In terms of processing, kalata-B1 is a cyclic peptide which occurs in three forms: with unmodified Trp-111, with Trp-111 oxidized to form oxindolylalanine and with Trp-111 oxidized to form N-formylkynurenine. Oxidation is enhanced by exposure to sunlight. In terms of tissue distribution, leaves and stems. Lower in roots.

In terms of biological role, probably participates in a plant defense mechanism. Has antibiotic activity. Has a diuretic effect. Has a uterotonic effect in humans. Active against the Gram-positive S.aureus with a minimum inhibition concentration of approximately 0.2 microM. Relatively ineffective against Gram-negative bacteria such as E.coli and P.aeruginosa. Inhibitory effect on the growth and development of larvae from H.punctigera. The unmodified form has hemolytic activity, the oxidized form lacks hemolytic activity. If the protein is linearized, hemolytic activity is lost. This is Kalata-B1 (OAK1) from Oldenlandia affinis.